Reading from the N-terminus, the 172-residue chain is Small ribosomal subunit protein uS5 (172 aa).

Residues 7–70 enclose the S5 DRBM domain; sequence VVEHLVNVNR…QNAKKYMIEV (64 aa).

It belongs to the universal ribosomal protein uS5 family. As to quaternary structure, part of the 30S ribosomal subunit. Contacts proteins S4 and S8.

Functionally, with S4 and S12 plays an important role in translational accuracy. In terms of biological role, located at the back of the 30S subunit body where it stabilizes the conformation of the head with respect to the body. This chain is Small ribosomal subunit protein uS5, found in Orientia tsutsugamushi (strain Boryong) (Rickettsia tsutsugamushi).